The sequence spans 448 residues: Ribosomal protein uS12 methylthiotransferase RimO (448 aa).

The MTTase N-terminal domain occupies 16–126 (PRISFVSLGC…VVAAVHEAVP (111 aa)). [4Fe-4S] cluster contacts are provided by cysteine 25, cysteine 61, cysteine 90, cysteine 157, cysteine 161, and cysteine 164. Positions 143-380 (LTPRHYAYLK…MEAQSHVSLR (238 aa)) constitute a Radical SAM core domain. A TRAM domain is found at 383–448 (RAKVGKRLSV…DAYDLHGIAV (66 aa)).

This sequence belongs to the methylthiotransferase family. RimO subfamily. The cofactor is [4Fe-4S] cluster.

The protein resides in the cytoplasm. The catalysed reaction is L-aspartate(89)-[ribosomal protein uS12]-hydrogen + (sulfur carrier)-SH + AH2 + 2 S-adenosyl-L-methionine = 3-methylsulfanyl-L-aspartate(89)-[ribosomal protein uS12]-hydrogen + (sulfur carrier)-H + 5'-deoxyadenosine + L-methionine + A + S-adenosyl-L-homocysteine + 2 H(+). Its function is as follows. Catalyzes the methylthiolation of an aspartic acid residue of ribosomal protein uS12. This chain is Ribosomal protein uS12 methylthiotransferase RimO, found in Methylorubrum extorquens (strain PA1) (Methylobacterium extorquens).